The chain runs to 419 residues: MKVSVLLGLQWGDEGKGKVVDVLTPKYDIVARFQGGPNAGHTLLFADRKYVLCSIPSGVFQGKVNIIGNGVVLDPILFKAETETLTSSCSNLVDKIYISRKAHLILPTHRLLDVAYETQKGNNKIGTTGKGIGPAYTDKVSRNGLRIGDIDYNFEEKYRYAIARHKELLHQMNFQYDLLPLEREWKKSIEVIKRFKRINSDNFINKALIGGRTVLAEGAQGTMLDVDFGSYPFVTSSNTICASACTGLGVAPAKIGDVFGIFKAYCTRVGSGPFPTELSDEIGEKLRNIGNEYGSITKRPRRCGWIDLVALRYAVMINGVTQLIMMKSDVLDTFDTVKACIAYEVNGQKMEDFPFEIGSSVKPIYTELVGWKTNMTKIKSENEFPKAFKDYLLFLEESLGVSIKIVSLGPDREQTIIRE.

GTP-binding positions include 12–18 (GDEGKGK) and 40–42 (GHT). The active-site Proton acceptor is Asp-13. Mg(2+) is bound by residues Asp-13 and Gly-40. Residues 13–16 (DEGK), 38–41 (NAGH), Thr-128, Arg-142, Gln-220, Thr-235, and Arg-299 contribute to the IMP site. Catalysis depends on His-41, which acts as the Proton donor. 295-301 (SITKRPR) contacts substrate. Residues Arg-301, 327–329 (KSD), and 407–409 (SLG) contribute to the GTP site.

Belongs to the adenylosuccinate synthetase family. In terms of assembly, homodimer. It depends on Mg(2+) as a cofactor.

It localises to the cytoplasm. The enzyme catalyses IMP + L-aspartate + GTP = N(6)-(1,2-dicarboxyethyl)-AMP + GDP + phosphate + 2 H(+). It functions in the pathway purine metabolism; AMP biosynthesis via de novo pathway; AMP from IMP: step 1/2. Functionally, plays an important role in the de novo pathway of purine nucleotide biosynthesis. Catalyzes the first committed step in the biosynthesis of AMP from IMP. The polypeptide is Adenylosuccinate synthetase (Azobacteroides pseudotrichonymphae genomovar. CFP2).